The primary structure comprises 148 residues: Lysozyme C (148 aa).

The N-terminal stretch at 1–18 is a signal peptide; that stretch reads MRALIILGLVLLSVTVQG. The region spanning 19–148 is the C-type lysozyme domain; the sequence is KIFERCELAR…VSQYVKGCGV (130 aa). 4 cysteine pairs are disulfide-bonded: Cys-24-Cys-146, Cys-48-Cys-134, Cys-83-Cys-99, and Cys-95-Cys-113. Residues Glu-53 and Asp-71 contribute to the active site.

The protein belongs to the glycosyl hydrolase 22 family. As to quaternary structure, monomer.

The protein resides in the secreted. The catalysed reaction is Hydrolysis of (1-&gt;4)-beta-linkages between N-acetylmuramic acid and N-acetyl-D-glucosamine residues in a peptidoglycan and between N-acetyl-D-glucosamine residues in chitodextrins.. In terms of biological role, lysozymes have primarily a bacteriolytic function; those in tissues and body fluids are associated with the monocyte-macrophage system and enhance the activity of immunoagents. Also plays a role in digestion in this species. The chain is Lysozyme C (LYZ) from Trachypithecus francoisi (Francois' leaf monkey).